The following is a 1891-amino-acid chain: Endoribonuclease Dicer-L (1891 aa).

One can recognise a Helicase ATP-binding domain in the interval 41 to 217; sequence LLEAALDHNT…DLEEKIQKLE (177 aa). Position 54 to 61 (54 to 61) interacts with ATP; the sequence is LNSGSGKT. A DECH box motif is present at residues 165 to 168; that stretch reads DECH. In terms of domain architecture, Helicase C-terminal spans 425–594; the sequence is SFPSPFTNIL…SIDCGNTESE (170 aa). In terms of domain architecture, Dicer dsRNA-binding fold spans 622 to 714; it reads AIGHINRYCA…MPVGKETVKY (93 aa). One can recognise a PAZ domain in the interval 887–1034; it reads KFVEDIEKSE…LVPELCAIHP (148 aa). RNase III domains follow at residues 1248-1379 and 1635-1793; these read TSDM…ETSG and FENF…MDSG. Residues Glu1292, Asp1370, Glu1373, Glu1674, Asp1779, and Glu1782 each contribute to the Mg(2+) site. Residues 1818-1883 enclose the DRBM domain; sequence VPRSPVRELL…ARRALRSLKA (66 aa).

This sequence belongs to the helicase family. Dicer subfamily. As to quaternary structure, component of the RISC loading complex (RLC), or micro-RNA (miRNA) loading complex (miRLC), which is composed of dicer1, ago2 and tarbp2; dicer1 and tarbp2 are required to process precursor miRNAs (pre-miRNAs) to mature miRNAs and then load them onto ago2. Note that the trimeric RLC/miRLC is also referred to as RISC. Mg(2+) serves as cofactor. Mn(2+) is required as a cofactor.

The protein localises to the cytoplasm. The enzyme catalyses Endonucleolytic cleavage to 5'-phosphomonoester.. In terms of biological role, double-stranded RNA (dsRNA) endoribonuclease playing a central role in short dsRNA-mediated post-transcriptional gene silencing. Cleaves naturally occurring long dsRNAs and short hairpin pre-microRNAs (miRNA) into fragments of 21 to 23 nucleotides with 3' overhang of two nucleotides, producing respectively short interfering RNAs (siRNA) and mature microRNAs. SiRNAs and miRNAs serve as guide to direct the RNA-induced silencing complex (RISC) to complementary RNAs to degrade them or prevent their translation. Gene silencing mediated by siRNAs, also called RNA interference, controls the elimination of transcripts from mobile and repetitive DNA elements of the genome but also the degradation of exogenous RNA of viral origin for instance. The miRNA pathway on the other side is a mean to specifically regulate the expression of target genes. During embryonic development, at the left-right organizer, post-transcriptionally regulates the expression of dand5 in flow sensor cells. In post-flow stages, acts along with Bicc1 to repress dand5 mRNA translation and decay. Decreased Dand5 expression lifts repression of Nodal and defines leftness by induction of the lateral plate mesoderm Nodal signaling cascade. The sequence is that of Endoribonuclease Dicer-L (dicer1.L) from Xenopus laevis (African clawed frog).